Here is a 1139-residue protein sequence, read N- to C-terminus: Solute carrier family 12 member 5 (1139 aa).

Disordered stretches follow at residues 1–63 (MSRR…GKEY) and 92–116 (TNLP…KPVQ). Residues 1–98 (MSRRFTVTSL…ANYTNLPQGS (98 aa)) are Cytoplasmic-facing. Basic and acidic residues predominate over residues 19–45 (PDPESRRHSVADPRHLPGEDVKGDGNP). Residues 46–55 (KESSPFINST) show a composition bias toward polar residues. A Phosphothreonine modification is found at threonine 57. Over residues 98–111 (SREHEEAENNEGGK) the composition is skewed to basic and acidic residues. A discontinuously helical transmembrane segment spans residues 99-120 (REHEEAENNEGGKKKPVQAPRM). Lysine 113 lines the K(+) pocket. The Extracellular portion of the chain corresponds to 121 to 129 (GTFMGVYLP). Residues 130–151 (CLQNIFGVILFLRLTWVVGIAG) form a helical membrane-spanning segment. At 152 to 174 (IMESFCMVFICCSCTMLTAISMS) the chain is on the cytoplasmic side. The helical transmembrane segment at 175–203 (AIATNGVVPAGGSYYMISRSLGPEFGGAV) threads the bilayer. Alanine 184 contributes to the chloride binding site. At 204-229 (GLCFYLGTTFAGAMYILGTIEILLAY) the chain is on the extracellular side. 2 consecutive transmembrane segments (helical) span residues 230 to 250 (LFPA…AAML) and 251 to 276 (NNMR…KYVN). Topologically, residues 277-402 (KFALVFLGCV…ERSGMTSVGL (126 aa)) are extracellular. Cysteine 310 and cysteine 325 form a disulfide bridge. Asparagine 314, asparagine 333, asparagine 351, and asparagine 362 each carry an N-linked (GlcNAc...) asparagine glycan. Cysteines 345 and 354 form a disulfide. Residues 403–420 (ADGTPIDMDHPYVFSDMT) form a helical membrane-spanning segment. Methionine 410 serves as a coordination point for K(+). Tyrosine 414 and valine 415 together coordinate chloride. Residues 421-429 (SYFTLLVGI) lie on the Cytoplasmic side of the membrane. The helical transmembrane segment at 430–453 (YFPSVTGIMAGSNRSGDLRDAQKS) threads the bilayer. Aspartate 446 serves as a coordination point for K(+). Residues 454 to 485 (IPTGTILAIATTSAVYISSVVLFGACIEGVVL) are Extracellular-facing. Residues 486–513 (RDKFGEAVNGNLVVGTLAWPSPWVIVIG) form a helical membrane-spanning segment. Topologically, residues 514–534 (SFFSTCGAGLQSLTGAPRLLQ) are cytoplasmic. 2 helical membrane-spanning segments follow: residues 535–555 (AISR…KANG) and 556–578 (EPTW…ASLD). Chloride is bound at residue glutamate 569. The Cytoplasmic segment spans residues 579-592 (EVAPILSMFFLMCY). The next 2 membrane-spanning stretches (helical) occupy residues 593–615 (MFVN…PRFR) and 616–632 (YYHW…CLAL). The Cytoplasmic portion of the chain corresponds to 633–1139 (MFICSWYYAL…GGREVITIYS (507 aa)). A scissor helix region spans residues 667-681 (GIRGLSLSAARYALL). Phosphothreonine; by OXSR1 and STK39 is present on threonine 929. Residues 942–1052 (MHLTKNERER…GPSPVSSEGI (111 aa)) form a disordered region. Positions 945-962 (TKNEREREIQSITDESRG) are enriched in basic and acidic residues. The span at 982 to 994 (TAGDSEEKPEEEV) shows a compositional bias: acidic residues. Over residues 1003-1012 (PSCPSSSPSP) the composition is skewed to low complexity. Basic and acidic residues predominate over residues 1023 to 1042 (DPEKVHLTWTKDKSVAEKNK). At threonine 1030 the chain carries Phosphothreonine; by OXSR1 and STK39. A phosphoserine mark is found at serine 1045, serine 1048, and serine 1049.

This sequence belongs to the SLC12A transporter family. K/Cl co-transporter subfamily. Homodimer; adopts a domain-swap conformation at the scissor helices connecting the transmembrane domain and C-terminal domain. Heterodimer with K-Cl cotransporters SLC12A6 and SLC12A7. Interacts with AP2A1. In terms of processing, phosphorylated at Thr-929 and Thr-1030 by OXSR1/OSR1 and STK39/SPAK downstream of WNK kinases (WNK1, WNK2, WNK3 or WNK4), inhibiting the potassium-chloride cotransport activity. In terms of tissue distribution, brain specific. Detected in neuronal cells.

It is found in the cell membrane. It localises to the cell projection. The protein localises to the dendrite. The enzyme catalyses K(+)(in) + chloride(in) = K(+)(out) + chloride(out). Inhibited following phosphorylation by OXSR1/OSR1 and STK39/SPAK: phosphorylation takes place downstream of WNK kinases (WNK1, WNK2, WNK3 or WNK4) in response to hyperosmotic stress and subsequent cell shrinkage. Mediates electroneutral potassium-chloride cotransport in mature neurons and is required for neuronal Cl(-) homeostasis. As major extruder of intracellular chloride, it establishes the low neuronal Cl(-) levels required for chloride influx after binding of GABA-A and glycine to their receptors, with subsequent hyperpolarization and neuronal inhibition. Involved in the regulation of dendritic spine formation and maturation. The sequence is that of Solute carrier family 12 member 5 from Homo sapiens (Human).